The following is a 204-amino-acid chain: Somatotropin (204 aa).

Residues 1–17 form the signal peptide; the sequence is MDRVVLLLSVLSLGVSS. Position 18 is a pyrrolidone carboxylic acid (Gln-18). Residue His-36 participates in Zn(2+) binding. A disulfide bridge connects residues Cys-69 and Cys-177. Glu-186 contacts Zn(2+). Cysteines 194 and 202 form a disulfide.

The protein belongs to the somatotropin/prolactin family.

Its subcellular location is the secreted. Growth hormone plays an important role in growth control and is involved in the regulation of several anabolic processes. Implicated as an osmoregulatory substance important for seawater adaptation. The protein is Somatotropin (gh) of Lates calcarifer (Barramundi).